We begin with the raw amino-acid sequence, 397 residues long: Anhydro-N-acetylmuramic acid kinase (397 aa).

9-16 is a binding site for ATP; it reads GTSYDAID.

It belongs to the anhydro-N-acetylmuramic acid kinase family.

The catalysed reaction is 1,6-anhydro-N-acetyl-beta-muramate + ATP + H2O = N-acetyl-D-muramate 6-phosphate + ADP + H(+). It participates in amino-sugar metabolism; 1,6-anhydro-N-acetylmuramate degradation. The protein operates within cell wall biogenesis; peptidoglycan recycling. In terms of biological role, catalyzes the specific phosphorylation of 1,6-anhydro-N-acetylmuramic acid (anhMurNAc) with the simultaneous cleavage of the 1,6-anhydro ring, generating MurNAc-6-P. Is required for the utilization of anhMurNAc either imported from the medium or derived from its own cell wall murein, and thus plays a role in cell wall recycling. This chain is Anhydro-N-acetylmuramic acid kinase, found in Rhodococcus erythropolis (strain PR4 / NBRC 100887).